Here is a 441-residue protein sequence, read N- to C-terminus: Ribulose bisphosphate carboxylase large chain (441 aa).

Substrate contacts are provided by N89 and T139. Catalysis depends on K141, which acts as the Proton acceptor. Residue K143 participates in substrate binding. Mg(2+) contacts are provided by K167, D169, and E170. K167 is modified (N6-carboxylysine). The active-site Proton acceptor is H260. Residues R261, H293, and S345 each coordinate substrate.

This sequence belongs to the RuBisCO large chain family. Type I subfamily. As to quaternary structure, heterohexadecamer of 8 large chains and 8 small chains; disulfide-linked. The disulfide link is formed within the large subunit homodimers. Mg(2+) is required as a cofactor. Post-translationally, the disulfide bond which can form in the large chain dimeric partners within the hexadecamer appears to be associated with oxidative stress and protein turnover.

It is found in the plastid. The protein resides in the chloroplast. The enzyme catalyses 2 (2R)-3-phosphoglycerate + 2 H(+) = D-ribulose 1,5-bisphosphate + CO2 + H2O. It carries out the reaction D-ribulose 1,5-bisphosphate + O2 = 2-phosphoglycolate + (2R)-3-phosphoglycerate + 2 H(+). Functionally, ruBisCO catalyzes two reactions: the carboxylation of D-ribulose 1,5-bisphosphate, the primary event in carbon dioxide fixation, as well as the oxidative fragmentation of the pentose substrate in the photorespiration process. Both reactions occur simultaneously and in competition at the same active site. The sequence is that of Ribulose bisphosphate carboxylase large chain from Fouquieria splendens (Ocotillo).